A 28-amino-acid polypeptide reads, in one-letter code: Humanin-like 2 (28 aa).

It belongs to the humanin family. Highly expressed in testis. Also expressed in kidney, heart, skeletal muscles and brain.

The protein resides in the secreted. It localises to the cytoplasm. Its function is as follows. Plays a role as a neuroprotective and antiapoptotic factor. In Homo sapiens (Human), this protein is Humanin-like 2.